Reading from the N-terminus, the 73-residue chain is Protein SlyX homolog (73 aa).

The protein belongs to the SlyX family.

In Pasteurella multocida (strain Pm70), this protein is Protein SlyX homolog.